A 166-amino-acid polypeptide reads, in one-letter code: Endoribonuclease YbeY (166 aa).

Residues His-125, His-129, and His-135 each contribute to the Zn(2+) site.

The protein belongs to the endoribonuclease YbeY family. Zn(2+) is required as a cofactor.

It localises to the cytoplasm. Single strand-specific metallo-endoribonuclease involved in late-stage 70S ribosome quality control and in maturation of the 3' terminus of the 16S rRNA. This chain is Endoribonuclease YbeY, found in Alkalilimnicola ehrlichii (strain ATCC BAA-1101 / DSM 17681 / MLHE-1).